A 95-amino-acid polypeptide reads, in one-letter code: Small ribosomal subunit protein bS6 (95 aa).

It belongs to the bacterial ribosomal protein bS6 family.

Binds together with bS18 to 16S ribosomal RNA. The chain is Small ribosomal subunit protein bS6 from Geobacillus kaustophilus (strain HTA426).